A 165-amino-acid polypeptide reads, in one-letter code: SsrA-binding protein (165 aa).

The protein belongs to the SmpB family.

It localises to the cytoplasm. Required for rescue of stalled ribosomes mediated by trans-translation. Binds to transfer-messenger RNA (tmRNA), required for stable association of tmRNA with ribosomes. tmRNA and SmpB together mimic tRNA shape, replacing the anticodon stem-loop with SmpB. tmRNA is encoded by the ssrA gene; the 2 termini fold to resemble tRNA(Ala) and it encodes a 'tag peptide', a short internal open reading frame. During trans-translation Ala-aminoacylated tmRNA acts like a tRNA, entering the A-site of stalled ribosomes, displacing the stalled mRNA. The ribosome then switches to translate the ORF on the tmRNA; the nascent peptide is terminated with the 'tag peptide' encoded by the tmRNA and targeted for degradation. The ribosome is freed to recommence translation, which seems to be the essential function of trans-translation. This Parvibaculum lavamentivorans (strain DS-1 / DSM 13023 / NCIMB 13966) protein is SsrA-binding protein.